Reading from the N-terminus, the 459-residue chain is Bifunctional protein GlmU (459 aa).

The tract at residues 1–230 is pyrophosphorylase; the sequence is MSNRFAVILA…FDETLGVNDR (230 aa). UDP-N-acetyl-alpha-D-glucosamine-binding positions include 9-12, lysine 23, glutamine 73, and 78-79; these read LAAG and GT. Residue aspartate 103 coordinates Mg(2+). UDP-N-acetyl-alpha-D-glucosamine is bound by residues glycine 140, glutamate 155, asparagine 170, and asparagine 228. Residue asparagine 228 coordinates Mg(2+). The segment at 231 to 251 is linker; it reads VALSQAEIIMKNRINRKNMVN. The N-acetyltransferase stretch occupies residues 252 to 459; that stretch reads GVTIIDPSNT…VDQLLNKKKS (208 aa). UDP-N-acetyl-alpha-D-glucosamine contacts are provided by arginine 333 and lysine 351. Residue histidine 363 is the Proton acceptor of the active site. Tyrosine 366 and asparagine 377 together coordinate UDP-N-acetyl-alpha-D-glucosamine. Acetyl-CoA contacts are provided by residues 386–387, alanine 423, and arginine 440; that span reads NY.

This sequence in the N-terminal section; belongs to the N-acetylglucosamine-1-phosphate uridyltransferase family. It in the C-terminal section; belongs to the transferase hexapeptide repeat family. As to quaternary structure, homotrimer. Mg(2+) is required as a cofactor.

It localises to the cytoplasm. It carries out the reaction alpha-D-glucosamine 1-phosphate + acetyl-CoA = N-acetyl-alpha-D-glucosamine 1-phosphate + CoA + H(+). The enzyme catalyses N-acetyl-alpha-D-glucosamine 1-phosphate + UTP + H(+) = UDP-N-acetyl-alpha-D-glucosamine + diphosphate. The protein operates within nucleotide-sugar biosynthesis; UDP-N-acetyl-alpha-D-glucosamine biosynthesis; N-acetyl-alpha-D-glucosamine 1-phosphate from alpha-D-glucosamine 6-phosphate (route II): step 2/2. Its pathway is nucleotide-sugar biosynthesis; UDP-N-acetyl-alpha-D-glucosamine biosynthesis; UDP-N-acetyl-alpha-D-glucosamine from N-acetyl-alpha-D-glucosamine 1-phosphate: step 1/1. It functions in the pathway bacterial outer membrane biogenesis; LPS lipid A biosynthesis. Its function is as follows. Catalyzes the last two sequential reactions in the de novo biosynthetic pathway for UDP-N-acetylglucosamine (UDP-GlcNAc). The C-terminal domain catalyzes the transfer of acetyl group from acetyl coenzyme A to glucosamine-1-phosphate (GlcN-1-P) to produce N-acetylglucosamine-1-phosphate (GlcNAc-1-P), which is converted into UDP-GlcNAc by the transfer of uridine 5-monophosphate (from uridine 5-triphosphate), a reaction catalyzed by the N-terminal domain. In Bacillus thuringiensis subsp. konkukian (strain 97-27), this protein is Bifunctional protein GlmU.